The sequence spans 290 residues: ATP phosphoribosyltransferase (290 aa).

The protein belongs to the ATP phosphoribosyltransferase family. Long subfamily. The cofactor is Mg(2+).

It is found in the cytoplasm. It carries out the reaction 1-(5-phospho-beta-D-ribosyl)-ATP + diphosphate = 5-phospho-alpha-D-ribose 1-diphosphate + ATP. It functions in the pathway amino-acid biosynthesis; L-histidine biosynthesis; L-histidine from 5-phospho-alpha-D-ribose 1-diphosphate: step 1/9. Its activity is regulated as follows. Feedback inhibited by histidine. In terms of biological role, catalyzes the condensation of ATP and 5-phosphoribose 1-diphosphate to form N'-(5'-phosphoribosyl)-ATP (PR-ATP). Has a crucial role in the pathway because the rate of histidine biosynthesis seems to be controlled primarily by regulation of HisG enzymatic activity. This chain is ATP phosphoribosyltransferase (hisG), found in Saccharolobus solfataricus (strain ATCC 35092 / DSM 1617 / JCM 11322 / P2) (Sulfolobus solfataricus).